The sequence spans 452 residues: MELKNKKILVVGLAKTGVAVARFLAKAGAFVTVTDMREEEALADVLAELSDLDITYELGRHVPYSFLMADLIVVSPGVPMDIKPLEMARSQKRRVVSEVELASWFIKAPMVAITGTNGKTTTTTLTGEIFKACGFETFVGGNIGNPLIELAESGQEVARVVVELSSFQLEGVESFRPDVAVLLNITEDHLDRYHSFQEYIDAKLRIFENQTADDFAVLNIDDPLVAACASKLKAQLFPMSRLHELEEGISYRDGFITFSHKGKVLRFGTEGFKLKGVHNLDNIMASLASTLLMRCDGDCAYEAVKSFKGLPHRMELVEEIDGVAYYEDSKGTNVGSVVKSLESFDSGITLIAGGKDKGGSYEPLAPLVESRVSHLVLIGEAKARMQQALGSLTDTHEAQTLEEAVEIARRLTKPGGVVLFSPACSSFDMFKNYEERAERFKAAVRAGKKGEA.

115–121 (GTNGKTT) serves as a coordination point for ATP.

Belongs to the MurCDEF family.

Its subcellular location is the cytoplasm. The enzyme catalyses UDP-N-acetyl-alpha-D-muramoyl-L-alanine + D-glutamate + ATP = UDP-N-acetyl-alpha-D-muramoyl-L-alanyl-D-glutamate + ADP + phosphate + H(+). It functions in the pathway cell wall biogenesis; peptidoglycan biosynthesis. Cell wall formation. Catalyzes the addition of glutamate to the nucleotide precursor UDP-N-acetylmuramoyl-L-alanine (UMA). The protein is UDP-N-acetylmuramoylalanine--D-glutamate ligase of Geobacter sp. (strain M21).